The following is a 431-amino-acid chain: Enolase (431 aa).

Position 167 (Gln167) interacts with (2R)-2-phosphoglycerate. Glu209 functions as the Proton donor in the catalytic mechanism. The Mg(2+) site is built by Asp246, Glu289, and Asp316. Positions 341, 370, 371, and 392 each coordinate (2R)-2-phosphoglycerate. Lys341 (proton acceptor) is an active-site residue.

This sequence belongs to the enolase family. Component of the RNA degradosome, a multiprotein complex involved in RNA processing and mRNA degradation. Mg(2+) is required as a cofactor.

Its subcellular location is the cytoplasm. The protein resides in the secreted. The protein localises to the cell surface. It catalyses the reaction (2R)-2-phosphoglycerate = phosphoenolpyruvate + H2O. The protein operates within carbohydrate degradation; glycolysis; pyruvate from D-glyceraldehyde 3-phosphate: step 4/5. Its function is as follows. Catalyzes the reversible conversion of 2-phosphoglycerate (2-PG) into phosphoenolpyruvate (PEP). It is essential for the degradation of carbohydrates via glycolysis. The chain is Enolase from Shewanella halifaxensis (strain HAW-EB4).